A 284-amino-acid polypeptide reads, in one-letter code: uncharacterized protein (284 aa).

The first 23 residues, 1–23 (MKRGCAIAVMICGLITSVSAASA), serve as a signal peptide directing secretion.

It belongs to the surface antigen msp4 family.

This is an uncharacterized protein from Brucella abortus (strain 2308).